A 115-amino-acid polypeptide reads, in one-letter code: Large ribosomal subunit protein bL31B (115 aa).

The protein belongs to the bacterial ribosomal protein bL31 family. Type B subfamily. In terms of assembly, part of the 50S ribosomal subunit.

This is Large ribosomal subunit protein bL31B from Polynucleobacter necessarius subsp. necessarius (strain STIR1).